A 597-amino-acid chain; its full sequence is Sulfite reductase [NADPH] flavoprotein alpha-component (597 aa).

The 139-residue stretch at V62–V200 folds into the Flavodoxin-like domain. Residues S68–A73, S115–G118, and L151–C160 each bind FMN. Positions E232 to P446 constitute an FAD-binding FR-type domain. Residues T320, N354, R384–S387, S402–G404, and G417–S420 contribute to the FAD site. Residues S517 to R518, K523 to Q527, and D559 each bind NADP(+). Y597 contacts FAD.

Belongs to the NADPH-dependent sulphite reductase flavoprotein subunit CysJ family. It in the N-terminal section; belongs to the flavodoxin family. The protein in the C-terminal section; belongs to the flavoprotein pyridine nucleotide cytochrome reductase family. Alpha(8)-beta(8). The alpha component is a flavoprotein, the beta component is a hemoprotein. FAD is required as a cofactor. Requires FMN as cofactor.

It catalyses the reaction hydrogen sulfide + 3 NADP(+) + 3 H2O = sulfite + 3 NADPH + 4 H(+). It participates in sulfur metabolism; hydrogen sulfide biosynthesis; hydrogen sulfide from sulfite (NADPH route): step 1/1. Component of the sulfite reductase complex that catalyzes the 6-electron reduction of sulfite to sulfide. This is one of several activities required for the biosynthesis of L-cysteine from sulfate. The flavoprotein component catalyzes the electron flow from NADPH -&gt; FAD -&gt; FMN to the hemoprotein component. This Mannheimia succiniciproducens (strain KCTC 0769BP / MBEL55E) protein is Sulfite reductase [NADPH] flavoprotein alpha-component.